The following is a 464-amino-acid chain: L-aspartate oxidase (464 aa).

Residues 8–11 and 37–44 each bind FAD; these read SGLA and NSYLAQAG. R248 functions as the Proton donor/acceptor in the catalytic mechanism. Residues E329 and 345–346 each bind FAD; that span reads SL.

This sequence belongs to the FAD-dependent oxidoreductase 2 family. NadB subfamily. FAD is required as a cofactor.

The protein localises to the cytoplasm. It catalyses the reaction L-aspartate + O2 = iminosuccinate + H2O2. It participates in cofactor biosynthesis; NAD(+) biosynthesis; iminoaspartate from L-aspartate (oxidase route): step 1/1. Its function is as follows. Catalyzes the oxidation of L-aspartate to iminoaspartate, the first step in the de novo biosynthesis of NAD(+). The sequence is that of L-aspartate oxidase (nadB) from Pyrococcus furiosus (strain ATCC 43587 / DSM 3638 / JCM 8422 / Vc1).